The following is a 155-amino-acid chain: Nucleoside diphosphate kinase, cytosolic (155 aa).

The ATP site is built by Lys16, Phe64, Arg92, Thr98, Arg109, and Asn119. His122 acts as the Pros-phosphohistidine intermediate in catalysis.

The protein belongs to the NDK family. Homohexamer. It depends on Mg(2+) as a cofactor.

The protein resides in the cytoplasm. It catalyses the reaction a 2'-deoxyribonucleoside 5'-diphosphate + ATP = a 2'-deoxyribonucleoside 5'-triphosphate + ADP. The catalysed reaction is a ribonucleoside 5'-diphosphate + ATP = a ribonucleoside 5'-triphosphate + ADP. Major role in the synthesis of nucleoside triphosphates other than ATP. This is Nucleoside diphosphate kinase, cytosolic (ndkC-1) from Dictyostelium discoideum (Social amoeba).